The chain runs to 115 residues: Large ribosomal subunit protein eL30 (115 aa).

Phosphoserine is present on residues Ser-10 and Ser-16. At Lys-26 the chain carries N6-acetyllysine; alternate. Lys-26 is covalently cross-linked (Glycyl lysine isopeptide (Lys-Gly) (interchain with G-Cter in SUMO2); alternate).

This sequence belongs to the eukaryotic ribosomal protein eL30 family. As to quaternary structure, component of the large ribosomal subunit.

The protein localises to the cytoplasm. Functionally, component of the large ribosomal subunit. The ribosome is a large ribonucleoprotein complex responsible for the synthesis of proteins in the cell. In Homo sapiens (Human), this protein is Large ribosomal subunit protein eL30 (RPL30).